Here is a 61-residue protein sequence, read N- to C-terminus: Aerolysin regulatory protein (61 aa).

Over residues 1–14 the composition is skewed to basic residues; that stretch reads MMIKRHLPQPRHRE. Positions 1 to 61 are disordered; the sequence is MMIKRHLPQP…GQTHTGPQIR (61 aa). Residues 51–61 show a composition bias toward polar residues; sequence DGQTHTGPQIR.

Regulation of the expression of aerolysin. This is Aerolysin regulatory protein (aerC) from Aeromonas sobria.